The chain runs to 2382 residues: Nonribosomal peptide synthetase chyA (2382 aa).

The adenylation 1 stretch occupies residues 204 to 607; sequence QKCATQPESI…LGRKDHQVKI (404 aa). Residues 745–821 enclose the Carrier 1 domain; that stretch reads TPTTQNQRIL…DMASVLVKDH (77 aa). At Ser-782 the chain carries O-(pantetheine 4'-phosphoryl)serine. The segment at 857-1269 is condensation 1; that stretch reads EDVYPCTHMQ…LVPPEDMATL (413 aa). Positions 1294 to 1687 are adenylation 2; that stretch reads GQPDTLAIHS…VGRKDDQVKL (394 aa). The region spanning 1833–1909 is the Carrier 2 domain; the sequence is VPVSIHGRKV…GLSLKCATEN (77 aa). Ser-1870 bears the O-(pantetheine 4'-phosphoryl)serine mark. The interval 1967 to 2373 is condensation 2; sequence MTLHNFYSRY…FSDVIESLAS (407 aa).

The protein belongs to the NRP synthetase family.

Its pathway is pigment biosynthesis. Its function is as follows. Nonribosomal peptide synthetase; part of the gene cluster that mediates the biosynthesis of the yellow pigment chrysogine. the NRPS chyA mediates the condensation of anthranilic acid and alanine into the intermediate 2-(2-aminopropanamido)benzoic acid. The remainder of the pathway is highly branched yielding at least 13 chrysogine-related compounds. The malonyl transferase chyE converts 2-(2-aminopropanamido)benzoic acid and 2-(2-aminopropanamido)benzamidine into 2-(2-(2-carboxyacetamido)propanamido)benzoic acid and 3-((1-((2-carbamoylphenyl)amino)-1-oxopropan-2-yl)amino)-3-oxopropanoic acid, respectively. ChyD is an amidase, being responsible for the amidation of the carboxylic acid moiety of 2-(2-aminopropanamido)benzoic acid, 2-(2-(2-carboxyacetamido)propanamido)benzoic acid and 2-(2-((4-amino-1-carboxy-4-oxobutyl)amino)propanamido)benzoic acid. ChyC is involved in the same reactions as ChyD, but plays a more minor role in the amidation reactions compared to chyD. The oxidoreductases chyH and chyM are involved in oxidation reactions that form N-pyruvoylanthranilamide from 2-(2-aminopropanamido)benzamidine and (1-((2-carbamoylphenyl)amino)-1-oxopropan-2-yl)glutamine, respectively. N-pyruvoylanthranilamide is further converted via two further branches in the pathway, yielding chrysogine and additional chrysogine-related coumpounds. Chrysogine is likely formed by a spontaneous ring closure from N-pyruvoylanthranilamide. The polypeptide is Nonribosomal peptide synthetase chyA (Penicillium rubens (strain ATCC 28089 / DSM 1075 / NRRL 1951 / Wisconsin 54-1255) (Penicillium chrysogenum)).